The primary structure comprises 101 residues: Toxin Tpa8 (101 aa).

Positions 1-20 (MVKSEMKLVIFSLFLLLIGV) are cleaved as a signal peptide. The 75-residue stretch at 24-98 (KNGYPVIEGG…VMDRTKEYCE (75 aa)) folds into the LCN-type CS-alpha/beta domain. Intrachain disulfides connect cysteine 44-cysteine 70, cysteine 56-cysteine 75, cysteine 60-cysteine 77, and cysteine 71-cysteine 97.

This sequence belongs to the long (4 C-C) scorpion toxin superfamily. Sodium channel inhibitor family. Beta subfamily. Expressed by the venom gland.

The protein localises to the secreted. Its function is as follows. Excitatory insect beta-toxins induce a spastic paralysis. They bind voltage-independently at site-4 of sodium channels (Nav) and shift the voltage of activation toward more negative potentials thereby affecting sodium channel activation and promoting spontaneous and repetitive firing. This is Toxin Tpa8 from Tityus pachyurus (Colombian scorpion).